The chain runs to 568 residues: Pentatricopeptide repeat-containing protein At1g73400, mitochondrial (568 aa).

A mitochondrion-targeting transit peptide spans Met-1–Cys-55. 8 PPR repeats span residues Glu-233–Arg-263, Asp-267–Pro-301, Glu-302–Val-336, Thr-340–Pro-374, Asp-375–Pro-409, Asp-410–Pro-444, Ser-445–Gln-479, and Asp-480–Leu-514.

The protein belongs to the PPR family. P subfamily.

The protein localises to the mitochondrion. This chain is Pentatricopeptide repeat-containing protein At1g73400, mitochondrial, found in Arabidopsis thaliana (Mouse-ear cress).